A 131-amino-acid chain; its full sequence is Leptin receptor gene-related protein (131 aa).

4 consecutive transmembrane segments (helical) span residues 7-27 (LVAL…GCAL), 32-52 (VYWP…HFIA), 69-89 (LAYF…VILA), and 100-120 (GLVL…FLVF).

This sequence belongs to the OB-RGRP/VPS55 family. Interacts with LEPR. Interacts with RAB13.

The protein localises to the golgi apparatus membrane. It localises to the endosome membrane. Functionally, negatively regulates leptin receptor (LEPR) cell surface expression, and thus decreases response to leptin/LEP. Negatively regulates growth hormone (GH) receptor cell surface expression in liver. May play a role in liver resistance to GH during periods of reduced nutrient availability. In Bos taurus (Bovine), this protein is Leptin receptor gene-related protein (LEPROT).